The primary structure comprises 260 residues: Type III pantothenate kinase (260 aa).

Position 6–13 (aspartate 6–threonine 13) interacts with ATP. Glycine 107–arginine 110 lines the substrate pocket. The active-site Proton acceptor is aspartate 109. Position 129 (aspartate 129) interacts with K(+). Threonine 132 is a binding site for ATP. Position 184 (threonine 184) interacts with substrate.

This sequence belongs to the type III pantothenate kinase family. In terms of assembly, homodimer. NH4(+) serves as cofactor. K(+) is required as a cofactor.

The protein resides in the cytoplasm. The enzyme catalyses (R)-pantothenate + ATP = (R)-4'-phosphopantothenate + ADP + H(+). The protein operates within cofactor biosynthesis; coenzyme A biosynthesis; CoA from (R)-pantothenate: step 1/5. Functionally, catalyzes the phosphorylation of pantothenate (Pan), the first step in CoA biosynthesis. The polypeptide is Type III pantothenate kinase (Agathobacter rectalis (strain ATCC 33656 / DSM 3377 / JCM 17463 / KCTC 5835 / VPI 0990) (Eubacterium rectale)).